Consider the following 526-residue polypeptide: Na(+)/H(+) antiporter NhaB (526 aa).

13 consecutive transmembrane segments (helical) span residues 14 to 34 (FLGYAPDWYKLTIFGFLLINP), 35 to 55 (LLFYFVSPFWAGWLLVVEFIF), 99 to 119 (MLLVFMVAGIYFMKQLLLFVF), 122 to 142 (LLLRIHSKPLLSLAFCMAAAF), 146 to 166 (FLDALTVIAVIISVAIGFYGI), 206 to 226 (LMMHAGVGTALGGVMTMVGEP), 239 to 259 (FVDFFLRMSPVTVPVFICGIL), 307 to 327 (AVIGVWLIIALAFHLAEVGLI), 328 to 348 (GLSVIIMATTFCGVTEEHAIG), 357 to 377 (FTALLTVFFAIVAVIIDQQLF), 397 to 417 (YLFNGLLSSISDNVFVGSVYI), 451 to 471 (ATPNGQAAFLFLLTSSLAPLI), and 479 to 499 (VIMALPYTIVMTLVGLLCVEF).

Belongs to the NhaB Na(+)/H(+) (TC 2.A.34) antiporter family.

Its subcellular location is the cell inner membrane. It catalyses the reaction 2 Na(+)(in) + 3 H(+)(out) = 2 Na(+)(out) + 3 H(+)(in). Its function is as follows. Na(+)/H(+) antiporter that extrudes sodium in exchange for external protons. This is Na(+)/H(+) antiporter NhaB from Pectobacterium atrosepticum (strain SCRI 1043 / ATCC BAA-672) (Erwinia carotovora subsp. atroseptica).